The sequence spans 163 residues: Putative pre-16S rRNA nuclease (163 aa).

The protein belongs to the YqgF nuclease family.

The protein resides in the cytoplasm. In terms of biological role, could be a nuclease involved in processing of the 5'-end of pre-16S rRNA. In Chlamydia caviae (strain ATCC VR-813 / DSM 19441 / 03DC25 / GPIC) (Chlamydophila caviae), this protein is Putative pre-16S rRNA nuclease.